The sequence spans 243 residues: Large ribosomal subunit protein uL3 (243 aa).

Disordered regions lie at residues 139–164 (VSHRSIGSTGGRQDPGKTFKNKKMPG) and 218–243 (KPGKFRLADGGGEQTAAAPAAEQEGV). Position 151 is an N5-methylglutamine (Gln-151). Low complexity predominate over residues 231-243 (QTAAAPAAEQEGV).

This sequence belongs to the universal ribosomal protein uL3 family. As to quaternary structure, part of the 50S ribosomal subunit. Forms a cluster with proteins L14 and L19. Methylated by PrmB.

Functionally, one of the primary rRNA binding proteins, it binds directly near the 3'-end of the 23S rRNA, where it nucleates assembly of the 50S subunit. The sequence is that of Large ribosomal subunit protein uL3 from Rhodopseudomonas palustris (strain BisB18).